We begin with the raw amino-acid sequence, 384 residues long: Mitogen-activated protein kinase 8 (384 aa).

Residues 26–321 (YQNLRPIGSG…VDEALQHPYI (296 aa)) form the Protein kinase domain. ATP contacts are provided by residues 33–38 (GSGAQG) and K55. Catalysis depends on D151, which acts as the Proton acceptor. The residue at position 183 (T183) is a Phosphothreonine. Residues 183-185 (TPY) carry the TXY motif. Y185 is subject to Phosphotyrosine.

This sequence belongs to the protein kinase superfamily. CMGC Ser/Thr protein kinase family. MAP kinase subfamily. The cofactor is Mg(2+). In terms of processing, dually phosphorylated on Thr-183 and Tyr-185, which activates the enzyme.

It is found in the cytoplasm. The protein localises to the nucleus. The protein resides in the synapse. The enzyme catalyses L-seryl-[protein] + ATP = O-phospho-L-seryl-[protein] + ADP + H(+). The catalysed reaction is L-threonyl-[protein] + ATP = O-phospho-L-threonyl-[protein] + ADP + H(+). Its activity is regulated as follows. Activated by threonine and tyrosine phosphorylation. Functionally, responds to activation by environmental stress and pro-inflammatory cytokines by phosphorylating a number of transcription factors, primarily components of AP-1 such as c-Jun and ATF2 and thus regulates AP-1 transcriptional activity. May play a role in the regulation of the circadian clock. This chain is Mitogen-activated protein kinase 8 (mapk8), found in Danio rerio (Zebrafish).